A 61-amino-acid polypeptide reads, in one-letter code: Small ribosomal subunit protein uS14B (61 aa).

Zn(2+) is bound by residues Cys-24, Cys-27, Cys-40, and Cys-43.

This sequence belongs to the universal ribosomal protein uS14 family. Zinc-binding uS14 subfamily. As to quaternary structure, part of the 30S ribosomal subunit. Contacts proteins S3 and S10. Zn(2+) serves as cofactor.

Its function is as follows. Binds 16S rRNA, required for the assembly of 30S particles and may also be responsible for determining the conformation of the 16S rRNA at the A site. This chain is Small ribosomal subunit protein uS14B, found in Mycolicibacterium smegmatis (strain ATCC 700084 / mc(2)155) (Mycobacterium smegmatis).